Here is a 155-residue protein sequence, read N- to C-terminus: Ribosomal RNA large subunit methyltransferase H (155 aa).

S-adenosyl-L-methionine contacts are provided by residues Leu-72, Gly-104, and 123 to 128 (LAKITL).

This sequence belongs to the RNA methyltransferase RlmH family. Homodimer.

It localises to the cytoplasm. It carries out the reaction pseudouridine(1915) in 23S rRNA + S-adenosyl-L-methionine = N(3)-methylpseudouridine(1915) in 23S rRNA + S-adenosyl-L-homocysteine + H(+). Specifically methylates the pseudouridine at position 1915 (m3Psi1915) in 23S rRNA. The protein is Ribosomal RNA large subunit methyltransferase H of Mycoplasma mycoides subsp. mycoides SC (strain CCUG 32753 / NCTC 10114 / PG1).